A 262-amino-acid polypeptide reads, in one-letter code: Phosphatidylglycerol--prolipoprotein diacylglyceryl transferase (262 aa).

4 helical membrane passes run L9–V29, I41–A61, I80–V100, and L109–L129. Residue R131 coordinates a 1,2-diacyl-sn-glycero-3-phospho-(1'-sn-glycerol). Helical transmembrane passes span Q167–F187, G197–M217, and G226–I246.

The protein belongs to the Lgt family.

The protein resides in the cell membrane. It carries out the reaction L-cysteinyl-[prolipoprotein] + a 1,2-diacyl-sn-glycero-3-phospho-(1'-sn-glycerol) = an S-1,2-diacyl-sn-glyceryl-L-cysteinyl-[prolipoprotein] + sn-glycerol 1-phosphate + H(+). It functions in the pathway protein modification; lipoprotein biosynthesis (diacylglyceryl transfer). Its function is as follows. Catalyzes the transfer of the diacylglyceryl group from phosphatidylglycerol to the sulfhydryl group of the N-terminal cysteine of a prolipoprotein, the first step in the formation of mature lipoproteins. The polypeptide is Phosphatidylglycerol--prolipoprotein diacylglyceryl transferase (Streptococcus pneumoniae (strain P1031)).